A 305-amino-acid chain; its full sequence is Cytochrome c biogenesis protein CcsA (305 aa).

The next 8 helical transmembrane spans lie at 11 to 31, 36 to 56, 75 to 95, 97 to 117, 142 to 162, 212 to 232, 239 to 259, and 273 to 293; these read ANAS…KAIF, ILQL…ALLL, LMFL…YIQI, FIGF…TFFL, IMMA…AFLF, TIGI…VWAN, WSWD…AIYL, and AIVA…VNLL.

It belongs to the CcmF/CycK/Ccl1/NrfE/CcsA family. In terms of assembly, may interact with Ccs1.

The protein localises to the plastid. The protein resides in the chloroplast thylakoid membrane. Functionally, required during biogenesis of c-type cytochromes (cytochrome c6 and cytochrome f) at the step of heme attachment. This is Cytochrome c biogenesis protein CcsA from Mesostigma viride (Green alga).